The following is a 375-amino-acid chain: PqqA peptide cyclase (375 aa).

The region spanning Ile18–Leu235 is the Radical SAM core domain. 3 residues coordinate [4Fe-4S] cluster: Cys32, Cys36, and Cys39.

It belongs to the radical SAM superfamily. PqqE family. Interacts with PqqD. The interaction is necessary for activity of PqqE. Requires [4Fe-4S] cluster as cofactor.

The enzyme catalyses [PQQ precursor protein] + S-adenosyl-L-methionine = E-Y cross-linked-[PQQ precursor protein] + 5'-deoxyadenosine + L-methionine + H(+). It functions in the pathway cofactor biosynthesis; pyrroloquinoline quinone biosynthesis. Catalyzes the cross-linking of a glutamate residue and a tyrosine residue in the PqqA protein as part of the biosynthesis of pyrroloquinoline quinone (PQQ). The chain is PqqA peptide cyclase from Rhizobium meliloti (strain 1021) (Ensifer meliloti).